Consider the following 724-residue polypeptide: uncharacterized protein (724 aa).

Disordered regions lie at residues Met-1–Asn-23, Pro-166–Asp-477, Glu-496–Pro-517, and Asp-532–Ser-691. Composition is skewed to polar residues over residues Val-227–Gln-245 and Ser-270–Ala-296. The segment covering Thr-304–Glu-322 has biased composition (basic and acidic residues). Polar residues predominate over residues Pro-403 to Met-413. Basic and acidic residues-rich tracts occupy residues Arg-550 to Leu-560 and Leu-637 to Ala-657. The segment covering Arg-682–Ser-691 has biased composition (low complexity).

This is an uncharacterized protein from Neurospora crassa (strain ATCC 24698 / 74-OR23-1A / CBS 708.71 / DSM 1257 / FGSC 987).